Reading from the N-terminus, the 87-residue chain is Scorpine-like peptide Tco 41.46-2 (87 aa).

The first 19 residues, 1–19, serve as a signal peptide directing secretion; that stretch reads MERKLALLLFLGMVTLASC. Residues 53–87 form the BetaSPN-type CS-alpha/beta domain; that stretch reads QFGCPAYEGYCNNHCQDIERKDGECHGFKCKCAKD. 3 disulfide bridges follow: cysteine 56–cysteine 77, cysteine 63–cysteine 82, and cysteine 67–cysteine 84.

This sequence belongs to the long chain scorpion toxin family. Class 1 subfamily. As to expression, expressed by the venom gland.

The protein localises to the secreted. Functionally, may have antibacterial activity. Its function is as follows. Inhibits voltage-gated potassium channel. In terms of biological role, does not induce hemolytic activity, lactate dehydrogenase (LDH) release from mast cells, mast cell degranulation, and antimicrobial effects. In vivo, injection into mice causes moderate edema formation, but induces very weak or no change in nociceptive sensibility. It also reduces mice locomotion, suggesting an increase in anxiety, but causes no alteration in rearing (standing on hind limbs). This chain is Scorpine-like peptide Tco 41.46-2, found in Tityus costatus (Brazilian scorpion).